The primary structure comprises 100 residues: Small ribosomal subunit protein uS14c (100 aa).

The protein belongs to the universal ribosomal protein uS14 family. Part of the 30S ribosomal subunit.

Its subcellular location is the plastid. It is found in the chloroplast. Functionally, binds 16S rRNA, required for the assembly of 30S particles. The polypeptide is Small ribosomal subunit protein uS14c (Citrus sinensis (Sweet orange)).